Here is a 276-residue protein sequence, read N- to C-terminus: MPIDNLPPLREVIDIYGLQAHKSLGQNFLFDLNLTSKIAHQAGNIEGKPVIEVGPGPGGLTRALLAKGALVIAIERDERCIPALLAIEKHYPKKLKLICNDALKQNFSKLFETYPEKPRIIANLPYNIGTQLLLNWLLVEPWPPFYESMTLMFQREVAKRITAKPQSAYYGRLSVLTGWRTTAKIAFDVPPQAFIPAPKITSSVVHIIPRIQPLTCSAQKLSFVTKTAFGQRRKMLRQNLKTLGGEMLLAKAGIDGTRRAETLSISEFVTLANLVI.

Positions 27, 29, 54, 75, 101, and 123 each coordinate S-adenosyl-L-methionine.

It belongs to the class I-like SAM-binding methyltransferase superfamily. rRNA adenine N(6)-methyltransferase family. RsmA subfamily.

It localises to the cytoplasm. It catalyses the reaction adenosine(1518)/adenosine(1519) in 16S rRNA + 4 S-adenosyl-L-methionine = N(6)-dimethyladenosine(1518)/N(6)-dimethyladenosine(1519) in 16S rRNA + 4 S-adenosyl-L-homocysteine + 4 H(+). Functionally, specifically dimethylates two adjacent adenosines (A1518 and A1519) in the loop of a conserved hairpin near the 3'-end of 16S rRNA in the 30S particle. May play a critical role in biogenesis of 30S subunits. This chain is Ribosomal RNA small subunit methyltransferase A, found in Bartonella quintana (strain Toulouse) (Rochalimaea quintana).